A 293-amino-acid chain; its full sequence is Phosphoribosylaminoimidazole-succinocarboxamide synthase (293 aa).

This sequence belongs to the SAICAR synthetase family.

The catalysed reaction is 5-amino-1-(5-phospho-D-ribosyl)imidazole-4-carboxylate + L-aspartate + ATP = (2S)-2-[5-amino-1-(5-phospho-beta-D-ribosyl)imidazole-4-carboxamido]succinate + ADP + phosphate + 2 H(+). Its pathway is purine metabolism; IMP biosynthesis via de novo pathway; 5-amino-1-(5-phospho-D-ribosyl)imidazole-4-carboxamide from 5-amino-1-(5-phospho-D-ribosyl)imidazole-4-carboxylate: step 1/2. In Bordetella petrii (strain ATCC BAA-461 / DSM 12804 / CCUG 43448), this protein is Phosphoribosylaminoimidazole-succinocarboxamide synthase.